Reading from the N-terminus, the 757-residue chain is MAVSLPLFQFILFLLLLLLSRTVYAYLIGVGSYDITGPAADVNMMGYANSDQIASGIHFRLRARAFIVAEPQGNRVVFVNLDACMASQIVTIKVLERLKARYGELYTEKNVAISGIHTHAGPGGYLQYVTYIVTSLGFVRQSFDVVVNGIEQSIVQAHESLRPGSAFVNKGDLLDAGVNRSPSSYLNNPAAERSKYKYDVDKEMTLVKFVDSQLGPTGSFNWFATHGTSMSRTNSLISGDNKGAAARFMEDWFENGQKNSVSSRNIPRRVSTIVSDFSRNRDRLLDIAATYKSSRGHSVDKSLDVKTRVRNGSKRKFVSAFCQSNCGDVSPNTLGTFCIDTGLPCDFNHSTCNGQNELCYGRGPGYPDEFESTRIIGEKQFKMAVELFNKATEKLQGKIGYQHAYLDFSNLDVTVPKAGGGSETVKTCPAAMGFGFAAGTTDGPGAFDFKQGDDQGNVFWRLVRNVLRTPGPEQVQCQKPKPILLDTGEMKEPYDWAPSILPIQILRIGQLVILSVPGEFTTMAGRRLRDAIKSFLISSDPKEFSNNMHVVIAGLTNTYSQYIATFEEYEVQRYEGASTLYGRHTLTAYIQEFKKLATALVNGLTLPRGPQPPDLLDKQISLLSPVVVDSTPLGVKFGDVKADVPPKSTFRRGQQVNATFWSGCPRNDLMTEGSFAVVETLREGGKWAPVYDDDDFSLKFKWSRPAKLSSESQATIEWRVPESAVAGVYRIRHYGASKSLFGSISSFSGSSSAFVVV.

The signal sequence occupies residues 1 to 25 (MAVSLPLFQFILFLLLLLLSRTVYA). Asparagine 311 carries N-linked (GlcNAc...) asparagine glycosylation. Serine 330 functions as the Nucleophile in the catalytic mechanism. Residues asparagine 348 and asparagine 657 are each glycosylated (N-linked (GlcNAc...) asparagine).

Belongs to the neutral ceramidase family.

Its subcellular location is the secreted. The protein resides in the endoplasmic reticulum. It localises to the golgi apparatus. The catalysed reaction is an N-acylsphing-4-enine + H2O = sphing-4-enine + a fatty acid. Hydrolyzes the sphingolipid ceramide into sphingosine and free fatty acid. In Arabidopsis thaliana (Mouse-ear cress), this protein is Neutral ceramidase 2.